A 431-amino-acid chain; its full sequence is Glutamate-1-semialdehyde 2,1-aminomutase (431 aa).

K269 carries the N6-(pyridoxal phosphate)lysine modification.

It belongs to the class-III pyridoxal-phosphate-dependent aminotransferase family. HemL subfamily. Homodimer. Pyridoxal 5'-phosphate serves as cofactor.

Its subcellular location is the cytoplasm. The catalysed reaction is (S)-4-amino-5-oxopentanoate = 5-aminolevulinate. It functions in the pathway porphyrin-containing compound metabolism; protoporphyrin-IX biosynthesis; 5-aminolevulinate from L-glutamyl-tRNA(Glu): step 2/2. The protein operates within porphyrin-containing compound metabolism; chlorophyll biosynthesis. In Chlorobium luteolum (strain DSM 273 / BCRC 81028 / 2530) (Pelodictyon luteolum), this protein is Glutamate-1-semialdehyde 2,1-aminomutase.